We begin with the raw amino-acid sequence, 727 residues long: DNA ligase (727 aa).

Residues 71–75 (DGEFD), 120–121 (SL), and Glu-150 each bind NAD(+). Catalysis depends on Lys-152, which acts as the N6-AMP-lysine intermediate. NAD(+) contacts are provided by Arg-173, Glu-213, Lys-329, and Lys-353. The Zn(2+) site is built by Cys-447, Cys-450, Cys-466, and Cys-472. In terms of domain architecture, BRCT spans 636–725 (SIERHLTGLS…PEAAAEAALP (90 aa)).

Belongs to the NAD-dependent DNA ligase family. LigA subfamily. Mg(2+) is required as a cofactor. The cofactor is Mn(2+).

The enzyme catalyses NAD(+) + (deoxyribonucleotide)n-3'-hydroxyl + 5'-phospho-(deoxyribonucleotide)m = (deoxyribonucleotide)n+m + AMP + beta-nicotinamide D-nucleotide.. Its function is as follows. DNA ligase that catalyzes the formation of phosphodiester linkages between 5'-phosphoryl and 3'-hydroxyl groups in double-stranded DNA using NAD as a coenzyme and as the energy source for the reaction. It is essential for DNA replication and repair of damaged DNA. The chain is DNA ligase from Saccharopolyspora erythraea (strain ATCC 11635 / DSM 40517 / JCM 4748 / NBRC 13426 / NCIMB 8594 / NRRL 2338).